The primary structure comprises 97 residues: YcgL domain-containing protein Pmen_1774 (97 aa).

The YcgL domain occupies 3–87; sequence RICSIYKSPR…PEEDYIQHLP (85 aa).

The polypeptide is YcgL domain-containing protein Pmen_1774 (Ectopseudomonas mendocina (strain ymp) (Pseudomonas mendocina)).